We begin with the raw amino-acid sequence, 224 residues long: 7-cyano-7-deazaguanine synthase (224 aa).

Position 9 to 19 (9 to 19) interacts with ATP; sequence LSGGLDSATVL. Zn(2+) is bound by residues cysteine 189, cysteine 199, cysteine 202, and cysteine 205.

This sequence belongs to the QueC family. It depends on Zn(2+) as a cofactor.

It catalyses the reaction 7-carboxy-7-deazaguanine + NH4(+) + ATP = 7-cyano-7-deazaguanine + ADP + phosphate + H2O + H(+). It functions in the pathway purine metabolism; 7-cyano-7-deazaguanine biosynthesis. Functionally, catalyzes the ATP-dependent conversion of 7-carboxy-7-deazaguanine (CDG) to 7-cyano-7-deazaguanine (preQ(0)). In Ralstonia pickettii (strain 12J), this protein is 7-cyano-7-deazaguanine synthase.